The following is a 189-amino-acid chain: uncharacterized protein (189 aa).

The protein belongs to the mimivirus R457/R459 family.

Its subcellular location is the virion. This is an uncharacterized protein from Acanthamoeba polyphaga mimivirus (APMV).